We begin with the raw amino-acid sequence, 175 residues long: Bifunctional protein PyrR (175 aa).

A PRPP-binding motif is present at residues 97-109; sequence IVLIDDVLFTGRT.

Belongs to the purine/pyrimidine phosphoribosyltransferase family. PyrR subfamily. Homodimer and homohexamer; in equilibrium.

The enzyme catalyses UMP + diphosphate = 5-phospho-alpha-D-ribose 1-diphosphate + uracil. Its function is as follows. Regulates transcriptional attenuation of the pyrimidine nucleotide (pyr) operon by binding in a uridine-dependent manner to specific sites on pyr mRNA. This disrupts an antiterminator hairpin in the RNA and favors formation of a downstream transcription terminator, leading to a reduced expression of downstream genes. Also displays a weak uracil phosphoribosyltransferase activity which is not physiologically significant. The chain is Bifunctional protein PyrR from Leuconostoc citreum (strain KM20).